The chain runs to 440 residues: tRNA-2-methylthio-N(6)-dimethylallyladenosine synthase (440 aa).

The MTTase N-terminal domain occupies 7–123 (NTFYIHTFGC…LPQLIEQARS (117 aa)). 6 residues coordinate [4Fe-4S] cluster: Cys16, Cys52, Cys86, Cys159, Cys163, and Cys166. The 231-residue stretch at 145-375 (RQGSISAFVP…IDLQNTISGE (231 aa)) folds into the Radical SAM core domain. In terms of domain architecture, TRAM spans 378–440 (QQAIGSVVEV…TSATLTGRPV (63 aa)).

This sequence belongs to the methylthiotransferase family. MiaB subfamily. As to quaternary structure, monomer. It depends on [4Fe-4S] cluster as a cofactor.

The protein resides in the cytoplasm. The catalysed reaction is N(6)-dimethylallyladenosine(37) in tRNA + (sulfur carrier)-SH + AH2 + 2 S-adenosyl-L-methionine = 2-methylsulfanyl-N(6)-dimethylallyladenosine(37) in tRNA + (sulfur carrier)-H + 5'-deoxyadenosine + L-methionine + A + S-adenosyl-L-homocysteine + 2 H(+). Catalyzes the methylthiolation of N6-(dimethylallyl)adenosine (i(6)A), leading to the formation of 2-methylthio-N6-(dimethylallyl)adenosine (ms(2)i(6)A) at position 37 in tRNAs that read codons beginning with uridine. This chain is tRNA-2-methylthio-N(6)-dimethylallyladenosine synthase, found in Pelodictyon phaeoclathratiforme (strain DSM 5477 / BU-1).